Reading from the N-terminus, the 192-residue chain is Flavin prenyltransferase UbiX (192 aa).

FMN is bound by residues 10 to 12 (GAS), serine 36, 92 to 95 (SVAT), and arginine 127. 2 residues coordinate dimethylallyl phosphate: tyrosine 157 and lysine 173.

The protein belongs to the UbiX/PAD1 family.

It carries out the reaction dimethylallyl phosphate + FMNH2 = prenylated FMNH2 + phosphate. Flavin prenyltransferase that catalyzes the synthesis of the prenylated FMN cofactor (prenyl-FMN) for 4-hydroxy-3-polyprenylbenzoic acid decarboxylase UbiD. The prenyltransferase is metal-independent and links a dimethylallyl moiety from dimethylallyl monophosphate (DMAP) to the flavin N5 and C6 atoms of FMN. In Chlamydia muridarum (strain MoPn / Nigg), this protein is Flavin prenyltransferase UbiX.